Reading from the N-terminus, the 261-residue chain is MQDRNFDDIAEKFSRNIYGTTKGQLRQAILWQDLDRVLAEMGPQKLRVLDAGGGEGQTAIKMAERGHQVILCDLSAQMIDRAKQAAEAKGVSDNMQFIHCAAQDVASHLETPVDLILFHAVLEWVADPRSVLQTLWSVLRPGGVLSLMFYNAHGLLMHNMVAGNFDYVQAGMPKKKKRTLSPDYPRDPAQVYLWLEEAGWQIMGKTGVRVFHDYLREKHQQRDCYEALLELETRYCRQEPYITLGRYIHVTARKPQSKDKV.

S-adenosyl-L-methionine is bound by residues R26, 52 to 53 (GG), D73, 102 to 103 (AQ), and H119.

The protein belongs to the class I-like SAM-binding methyltransferase superfamily. CmoM family.

It catalyses the reaction 5-carboxymethoxyuridine(34) in tRNA + S-adenosyl-L-methionine = 5-methoxycarbonylmethoxyuridine(34) in tRNA + S-adenosyl-L-homocysteine. In terms of biological role, catalyzes the methylation of 5-carboxymethoxyuridine (cmo5U) to form 5-methoxycarbonylmethoxyuridine (mcmo5U) at position 34 in tRNAs. Four tRNAs (tRNA(Ala1), tRNA(Ser1), tRNA(Pro3) and tRNA(Thr4)) are fully modified with mcmo5U in stationary-phase E.coli. Also present at low frequency in tRNA(Leu3) and tRNA(Val1). The polypeptide is tRNA 5-carboxymethoxyuridine methyltransferase (Escherichia coli (strain K12)).